A 249-amino-acid polypeptide reads, in one-letter code: Chitooligosaccharide deacetylase (249 aa).

Mg(2+) contacts are provided by H61 and H125.

The protein belongs to the YdjC deacetylase family. ChbG subfamily. In terms of assembly, homodimer. It depends on Mg(2+) as a cofactor.

It is found in the cytoplasm. The catalysed reaction is N,N'-diacetylchitobiose + H2O = N-acetyl-beta-D-glucosaminyl-(1-&gt;4)-D-glucosamine + acetate. It carries out the reaction diacetylchitobiose-6'-phosphate + H2O = N'-monoacetylchitobiose-6'-phosphate + acetate. The protein operates within glycan degradation; chitin degradation. Functionally, involved in the degradation of chitin. ChbG is essential for growth on the acetylated chitooligosaccharides chitobiose and chitotriose but is dispensable for growth on cellobiose and chitosan dimer, the deacetylated form of chitobiose. Deacetylation of chitobiose-6-P and chitotriose-6-P is necessary for both the activation of the chb promoter by the regulatory protein ChbR and the hydrolysis of phosphorylated beta-glucosides by the phospho-beta-glucosidase ChbF. Catalyzes the removal of only one acetyl group from chitobiose-6-P to yield monoacetylchitobiose-6-P, the inducer of ChbR and the substrate of ChbF. This is Chitooligosaccharide deacetylase from Escherichia coli (strain K12 / MC4100 / BW2952).